Consider the following 452-residue polypeptide: Adenylosuccinate synthetase 2 (452 aa).

GTP contacts are provided by residues Gly-19 to Arg-25 and Gly-47 to Thr-49. The active-site Proton acceptor is the Asp-20. Mg(2+) is bound by residues Asp-20 and Gly-47. IMP-binding positions include Asp-20 to Lys-23, Asn-45 to His-48, Thr-131, Arg-145, Gln-223, Thr-238, and Arg-338. His-48 functions as the Proton donor in the catalytic mechanism. Thr-334–Arg-340 serves as a coordination point for substrate. GTP-binding positions include Arg-340, Lys-366–Asp-368, and Gly-437–Gly-439.

This sequence belongs to the adenylosuccinate synthetase family. In terms of assembly, homodimer. It depends on Mg(2+) as a cofactor.

The protein resides in the cytoplasm. The enzyme catalyses IMP + L-aspartate + GTP = N(6)-(1,2-dicarboxyethyl)-AMP + GDP + phosphate + 2 H(+). Its pathway is purine metabolism; AMP biosynthesis via de novo pathway; AMP from IMP: step 1/2. Its function is as follows. Plays an important role in the de novo pathway of purine nucleotide biosynthesis. Catalyzes the first committed step in the biosynthesis of AMP from IMP. This chain is Adenylosuccinate synthetase 2, found in Cupriavidus pinatubonensis (strain JMP 134 / LMG 1197) (Cupriavidus necator (strain JMP 134)).